Consider the following 65-residue polypeptide: UPF0337 protein BCE_1081 (65 aa).

Residues 1–28 (MSGGLKEQITGKVEKTKGQVKEGIGEVT) are disordered. The segment covering 12–28 (KVEKTKGQVKEGIGEVT) has biased composition (basic and acidic residues).

Belongs to the UPF0337 (CsbD) family.

The polypeptide is UPF0337 protein BCE_1081 (Bacillus cereus (strain ATCC 10987 / NRS 248)).